We begin with the raw amino-acid sequence, 178 residues long: Large ribosomal subunit protein uL6 (178 aa).

This sequence belongs to the universal ribosomal protein uL6 family. Part of the 50S ribosomal subunit.

This protein binds to the 23S rRNA, and is important in its secondary structure. It is located near the subunit interface in the base of the L7/L12 stalk, and near the tRNA binding site of the peptidyltransferase center. This is Large ribosomal subunit protein uL6 from Aliarcobacter butzleri (strain RM4018) (Arcobacter butzleri).